A 777-amino-acid chain; its full sequence is Ribosome-releasing factor 2, mitochondrial (777 aa).

Positions 68-353 (AKIRNIGIMA…AVTMYLPSPE (286 aa)) constitute a tr-type G domain. Residues 77-84 (AHIDAGKT), 141-145 (DTPGH), and 195-198 (NKMD) each bind GTP.

Belongs to the TRAFAC class translation factor GTPase superfamily. Classic translation factor GTPase family. EF-G/EF-2 subfamily.

It is found in the mitochondrion. The catalysed reaction is GTP + H2O = GDP + phosphate + H(+). In terms of biological role, mitochondrial GTPase that mediates the disassembly of ribosomes from messenger RNA at the termination of mitochondrial protein biosynthesis. Acts in collaboration with MRRF. GTP hydrolysis follows the ribosome disassembly and probably occurs on the ribosome large subunit. Not involved in the GTP-dependent ribosomal translocation step during translation elongation. In Pongo abelii (Sumatran orangutan), this protein is Ribosome-releasing factor 2, mitochondrial.